The following is a 59-amino-acid chain: Large ribosomal subunit protein bL32 (59 aa).

The segment at 1–59 (MAVQQNKKSPSKRGMHRSHDFLTTAPIAVEPTTGEVHLRHHVSPNGYYRGRKVVKTKND) is disordered. The segment covering 49–59 (RGRKVVKTKND) has biased composition (basic residues).

The protein belongs to the bacterial ribosomal protein bL32 family.

In Ralstonia pickettii (strain 12J), this protein is Large ribosomal subunit protein bL32.